The following is a 716-amino-acid chain: Probable calcium-binding mitochondrial carrier K02F3.2 (716 aa).

The N-terminal domain stretch occupies residues 1-345; that stretch reads MSFDHLLTSS…CLKDIQAIDP (345 aa). EF-hand domains are found at residues 93–121, 127–162, 165–195, and 198–233; these read YNKETVRLLASAADTTKDGDISFEEFCAF, SPDALYLTAFELFDRNASDTISCDEFEAVIRHTQPL, QDFDFSSEFIKRYFGADKQRNVNYHSFCQLL, and FYEEQGIQAFKRYDKNGNGTISSLDFQQIMTTVKGH. The Ca(2+) site is built by aspartate 106, threonine 108, aspartate 110, glutamate 117, aspartate 140, asparagine 142, serine 144, threonine 146, and glutamate 151. Residues aspartate 211, asparagine 213, asparagine 215, threonine 217, and aspartate 222 each contribute to the Ca(2+) site. The interval 346 to 362 is linker loop domain; that stretch reads ERLKRVSQMDRLINIKA. The interval 372–664 is carrier domain; the sequence is GTAFLESAYR…RLFYVDFAGS (293 aa). Solcar repeat units follow at residues 376 to 468, 475 to 560, and 568 to 656; these read LESA…MRDK, IPLY…AKLA, and NSPG…LQRL. 6 helical membrane passes run 382-399, 443-462, 485-498, 535-554, 574-591, and 631-650; these read FLLGSVAGACGATAVYPI, GLLPQIVGVAPEKAIKLTMN, GTGGMCQVVFTNPL, GSRACFLRDIPFSAIYFPAY, FASAFIAGVPAAGLVTPA, and GTAARVCRSSPQFAVTLLTY. The segment at 665–716 is C-terminal domain; the sequence is RPTGSELATTKTIQDESSTNPDHVGGYKLAAATFSGIEHKFGLFLPKFETSK.

Belongs to the mitochondrial carrier (TC 2.A.29) family. In terms of assembly, homodimer (via N-terminus).

The protein localises to the mitochondrion inner membrane. Mitochondrial and calcium-binding carrier that catalyzes the calcium-dependent exchange of cytoplasmic glutamate with mitochondrial aspartate across the mitochondrial inner membrane. This chain is Probable calcium-binding mitochondrial carrier K02F3.2, found in Caenorhabditis elegans.